A 456-amino-acid polypeptide reads, in one-letter code: MNSRLQEIRARQTLRRKLLAQQLGAESADSIGAVLNSKDEQREIAETRETSRASYDTSAAVSKRKLPEEGKADEEVVQECKDSVEPQKEEENLPYREEIYKDSSTFLKGTQSLNPHNDYCQHFVDTGHRPQNFIRDVGLADRFEEYPKLRELIRLKDELIAKSNTPPMYLQADLETFDLRELKSEFDVILLEPPLEEYFRETGIAANEKWWTWEDIMKLDIEGIAGSRAFVFLWCGSGEGLDFGRMCLRKWGFRRSEDICWIKTNKDNPGKTKTLDPKAIFQRTKEHCLMGIKGTVHRSTDGDFIHANVDIDLIITEEPEIGNIEKPVEIFHIIEHFCLGRRRLHLFGRDSTIRPGWLTVGPTLTNSNFNSETYASYFNTPNSPLTGCTEEIERLRPKTPPPKSDRGFGASRGGGRGGASAGRGERGRERNRGSFRGDRGNFRGRGGPHRGVFAPR.

The segment at 43-74 is disordered; the sequence is EIAETRETSRASYDTSAAVSKRKLPEEGKADE. Positions 65–74 are enriched in basic and acidic residues; that stretch reads KLPEEGKADE. Interaction with METTL3 stretches follow at residues 135-136 and 237-238; these read RD and SG. The segment at 245-254 is positively charged region required for RNA-binding; it reads RMCLRKWGFR. Interaction with METTL3 regions lie at residues 255–258 and 278–287; these read RSED and KAIFQRTKEH. The tract at residues 297–298 is positively charged region required for RNA-binding; the sequence is HR. Positions 308–312 are interaction with METTL3; the sequence is NVDID. Positions 395 to 456 are disordered; it reads LRPKTPPPKS…GPHRGVFAPR (62 aa). A compositionally biased stretch (gly residues) spans 410–421; that stretch reads ASRGGGRGGASA. Residues 423–441 are compositionally biased toward basic and acidic residues; the sequence is RGERGRERNRGSFRGDRGN.

The protein belongs to the MT-A70-like family. Heterodimer; heterodimerizes with mettl3 to form an antiparallel heterodimer that constitutes an active methyltransferase. Component of the WMM complex, a N6-methyltransferase complex composed of a catalytic subcomplex, named MAC, and of an associated subcomplex, named MACOM. The MAC subcomplex is composed of mettl3 and mettl14.

Its subcellular location is the nucleus. The METTL3-METTL14 heterodimer forms a N6-methyltransferase complex that methylates adenosine residues at the N(6) position of some mRNAs and regulates the circadian clock, differentiation of embryonic stem cells and cortical neurogenesis. In the heterodimer formed with mettl3, mettl14 constitutes the RNA-binding scaffold that recognizes the substrate rather than the catalytic core. N6-methyladenosine (m6A), which takes place at the 5'-[AG]GAC-3' consensus sites of some mRNAs, plays a role in mRNA stability and processing. This is N(6)-adenosine-methyltransferase non-catalytic subunit METTL14 (mettl14) from Xenopus laevis (African clawed frog).